The sequence spans 167 residues: ATP synthase subunit delta, mitochondrial (167 aa).

A mitochondrion-targeting transit peptide spans 1-28 (MFRLSNYMLRKSQFPQGLVRAPFGIRGY).

This sequence belongs to the ATPase epsilon chain family. As to quaternary structure, F-type ATPases have 2 components, CF(1) - the catalytic core - and CF(0) - the membrane proton channel. CF(1) has five subunits: alpha(3), beta(3), gamma(1), delta(1), epsilon(1). CF(0) has three main subunits: a, b and c.

The protein localises to the mitochondrion. The protein resides in the mitochondrion inner membrane. Functionally, mitochondrial membrane ATP synthase (F(1)F(0) ATP synthase or Complex V) produces ATP from ADP in the presence of a proton gradient across the membrane which is generated by electron transport complexes of the respiratory chain. F-type ATPases consist of two structural domains, F(1) - containing the extramembraneous catalytic core, and F(0) - containing the membrane proton channel, linked together by a central stalk and a peripheral stalk. During catalysis, ATP turnover in the catalytic domain of F(1) is coupled via a rotary mechanism of the central stalk subunits to proton translocation. Part of the complex F(1) domain and of the central stalk which is part of the complex rotary element. Rotation of the central stalk against the surrounding alpha(3)beta(3) subunits leads to hydrolysis of ATP in three separate catalytic sites on the beta subunits. The chain is ATP synthase subunit delta, mitochondrial (atp16) from Schizosaccharomyces pombe (strain 972 / ATCC 24843) (Fission yeast).